A 389-amino-acid polypeptide reads, in one-letter code: Chalcone synthase 5 (389 aa).

Cys-164 is an active-site residue.

The protein belongs to the thiolase-like superfamily. Chalcone/stilbene synthases family.

It carries out the reaction (E)-4-coumaroyl-CoA + 3 malonyl-CoA + 3 H(+) = 2',4,4',6'-tetrahydroxychalcone + 3 CO2 + 4 CoA. It functions in the pathway secondary metabolite biosynthesis; flavonoid biosynthesis. Its function is as follows. The primary product of this enzyme is 4,2',4',6'-tetrahydroxychalcone (also termed naringenin-chalcone or chalcone) which can under specific conditions spontaneously isomerize into naringenin. This chain is Chalcone synthase 5 (CHS5), found in Trifolium subterraneum (Subterranean clover).